The following is a 229-amino-acid chain: Phosphoglycolate phosphatase (229 aa).

Asp-13 serves as the catalytic Nucleophile. Asp-13, Asp-15, and Asp-178 together coordinate Mg(2+).

It belongs to the HAD-like hydrolase superfamily. CbbY/CbbZ/Gph/YieH family. It depends on Mg(2+) as a cofactor.

It catalyses the reaction 2-phosphoglycolate + H2O = glycolate + phosphate. The protein operates within organic acid metabolism; glycolate biosynthesis; glycolate from 2-phosphoglycolate: step 1/1. Its function is as follows. Specifically catalyzes the dephosphorylation of 2-phosphoglycolate. Is involved in the dissimilation of the intracellular 2-phosphoglycolate formed during the DNA repair of 3'-phosphoglycolate ends, a major class of DNA lesions induced by oxidative stress. The protein is Phosphoglycolate phosphatase of Photobacterium profundum (strain SS9).